The primary structure comprises 142 residues: Organic hydroperoxide resistance protein-like 2 (142 aa).

Belongs to the OsmC/Ohr family.

The polypeptide is Organic hydroperoxide resistance protein-like 2 (Staphylococcus epidermidis (strain ATCC 35984 / DSM 28319 / BCRC 17069 / CCUG 31568 / BM 3577 / RP62A)).